The sequence spans 99 residues: Aspartyl/glutamyl-tRNA(Asn/Gln) amidotransferase subunit C (99 aa).

It belongs to the GatC family. Heterotrimer of A, B and C subunits.

It catalyses the reaction L-glutamyl-tRNA(Gln) + L-glutamine + ATP + H2O = L-glutaminyl-tRNA(Gln) + L-glutamate + ADP + phosphate + H(+). The catalysed reaction is L-aspartyl-tRNA(Asn) + L-glutamine + ATP + H2O = L-asparaginyl-tRNA(Asn) + L-glutamate + ADP + phosphate + 2 H(+). Allows the formation of correctly charged Asn-tRNA(Asn) or Gln-tRNA(Gln) through the transamidation of misacylated Asp-tRNA(Asn) or Glu-tRNA(Gln) in organisms which lack either or both of asparaginyl-tRNA or glutaminyl-tRNA synthetases. The reaction takes place in the presence of glutamine and ATP through an activated phospho-Asp-tRNA(Asn) or phospho-Glu-tRNA(Gln). The chain is Aspartyl/glutamyl-tRNA(Asn/Gln) amidotransferase subunit C from Paraburkholderia phymatum (strain DSM 17167 / CIP 108236 / LMG 21445 / STM815) (Burkholderia phymatum).